We begin with the raw amino-acid sequence, 316 residues long: 2-phospho-L-lactate guanylyltransferase (316 aa).

The segment covering 72-85 (TGVSTEAVSTSTST) has biased composition (low complexity). Disordered stretches follow at residues 72-107 (TGVSTEAVSTSTSTHADTTEHNAASDNYVSQSPTHT) and 119-138 (LRDDDDPDNEASTQERDGDK). Over residues 92–107 (HNAASDNYVSQSPTHT) the composition is skewed to polar residues.

The protein belongs to the CofC family. Homodimer.

It carries out the reaction (2S)-2-phospholactate + GTP + H(+) = (2S)-lactyl-2-diphospho-5'-guanosine + diphosphate. It participates in cofactor biosynthesis; coenzyme F420 biosynthesis. Its function is as follows. Guanylyltransferase that catalyzes the activation of (2S)-2-phospholactate (2-PL) as (2S)-lactyl-2-diphospho-5'-guanosine, via the condensation of 2-PL with GTP. It is involved in the biosynthesis of coenzyme F420, a hydride carrier cofactor. This Haloquadratum walsbyi (strain DSM 16790 / HBSQ001) protein is 2-phospho-L-lactate guanylyltransferase.